The following is a 355-amino-acid chain: Proto-oncogene Wnt-3 (355 aa).

The N-terminal stretch at methionine 1–alanine 21 is a signal peptide. Cystine bridges form between cysteine 80-cysteine 91, cysteine 131-cysteine 139, cysteine 141-cysteine 158, cysteine 206-cysteine 220, cysteine 208-cysteine 215, cysteine 284-cysteine 315, cysteine 300-cysteine 310, cysteine 314-cysteine 354, cysteine 330-cysteine 345, cysteine 332-cysteine 342, and cysteine 337-cysteine 338. Asparagine 90 is a glycosylation site (N-linked (GlcNAc...) asparagine). Serine 212 carries the O-palmitoleoyl serine; by PORCN lipid modification. Asparagine 301 carries an N-linked (GlcNAc...) asparagine glycan.

This sequence belongs to the Wnt family. Forms a soluble 1:1 complex with AFM; this prevents oligomerization and is required for prolonged biological activity. The complex with AFM may represent the physiological form in body fluids. Interacts with PORCN. Interacts with WLS. Post-translationally, palmitoleoylation is required for efficient binding to frizzled receptors. Depalmitoleoylation leads to Wnt signaling pathway inhibition. In terms of tissue distribution, detected at low levels in adult brain. Dorsal portion of the neural tube, dorsal ectoderm, the branchial arches, and the limb buds.

It localises to the secreted. It is found in the extracellular space. Its subcellular location is the extracellular matrix. Ligand for members of the frizzled family of seven transmembrane receptors. Functions in the canonical Wnt signaling pathway that results in activation of transcription factors of the TCF/LEF family. Required for normal gastrulation, formation of the primitive streak, and for the formation of the mesoderm during early embryogenesis. Required for normal formation of the apical ectodermal ridge and for normal embryonic limb development. This Mus musculus (Mouse) protein is Proto-oncogene Wnt-3 (Wnt3).